Reading from the N-terminus, the 334-residue chain is L-lactate dehydrogenase A chain (334 aa).

NAD(+) is bound by residues 30–58 (GQVG…LEDK) and R100. The substrate site is built by R107, N139, and R170. Residue N139 coordinates NAD(+). The Proton acceptor role is filled by H194. Substrate is bound at residue T249.

It belongs to the LDH/MDH superfamily. LDH family. In terms of assembly, homotetramer.

Its subcellular location is the cytoplasm. It catalyses the reaction (S)-lactate + NAD(+) = pyruvate + NADH + H(+). It functions in the pathway fermentation; pyruvate fermentation to lactate; (S)-lactate from pyruvate: step 1/1. Functionally, interconverts simultaneously and stereospecifically pyruvate and lactate with concomitant interconversion of NADH and NAD(+). This Xenopus laevis (African clawed frog) protein is L-lactate dehydrogenase A chain (ldha).